We begin with the raw amino-acid sequence, 329 residues long: Probable quinone oxidoreductase (329 aa).

At Ser191 the chain carries Phosphoserine.

It belongs to the zinc-containing alcohol dehydrogenase family. Quinone oxidoreductase subfamily.

It localises to the cytoplasm. Its subcellular location is the nucleus. It carries out the reaction 2 a quinone + NADPH + H(+) = 2 a 1,4-benzosemiquinone + NADP(+). The protein is Probable quinone oxidoreductase (zta1) of Schizosaccharomyces pombe (strain 972 / ATCC 24843) (Fission yeast).